The primary structure comprises 138 residues: Transcriptional activator protein Pur-alpha (138 aa).

S70 is subject to Phosphoserine.

This sequence belongs to the PUR DNA-binding protein family. As to quaternary structure, homodimer, heterodimer with PURB and heterotrimer with PURB and YBX1/Y-box protein 1. Interacts with FMR1; this interaction occurs in association with polyribosome.

It is found in the nucleus. Functionally, this is a probable transcription activator that specifically binds the purine-rich single strand of the PUR element located upstream of the c-Myc gene. May play a role in the initiation of DNA replication and in recombination. The polypeptide is Transcriptional activator protein Pur-alpha (Rattus norvegicus (Rat)).